Consider the following 254-residue polypeptide: Gamma-glutamyl-gamma-aminobutyrate hydrolase PuuD (254 aa).

The 235-residue stretch at 16-250 folds into the Glutamine amidotransferase type-1 domain; that stretch reads RNRLKGHATQ…ITACQHHIAE (235 aa). Residue Cys114 is the Nucleophile of the active site. Catalysis depends on residues His222 and Glu224.

Belongs to the peptidase C26 family. As to quaternary structure, homodimer.

It catalyses the reaction 4-(gamma-L-glutamylamino)butanoate + H2O = 4-aminobutanoate + L-glutamate. It participates in amine and polyamine degradation; putrescine degradation; 4-aminobutanoate from putrescine: step 4/4. Involved in the breakdown of putrescine via hydrolysis of the gamma-glutamyl linkage of gamma-glutamyl-gamma-aminobutyrate. This Escherichia coli (strain K12) protein is Gamma-glutamyl-gamma-aminobutyrate hydrolase PuuD (puuD).